Reading from the N-terminus, the 164-residue chain is Ubiquitin-fold modifier-conjugating enzyme 1 (164 aa).

Cysteine 116 (glycyl thioester intermediate) is an active-site residue.

This sequence belongs to the ubiquitin-conjugating enzyme family. UFC1 subfamily.

Its function is as follows. E2-like enzyme which forms an intermediate with UFM1 via a thioester linkage. The protein is Ubiquitin-fold modifier-conjugating enzyme 1 of Drosophila ananassae (Fruit fly).